We begin with the raw amino-acid sequence, 316 residues long: MSVQSITESNQPPVICLMGPTASGKTALAMALKDALPCDIVSVDSALIYRDMDIGTAKPTKSELVQYPHRLIDLRDASESYSAADFCRDALVEIAEIRSNGRIPLLVGGTMMYFKSLIEGISPLPTANPEIRQAIEAEALSKGWQAMHDQLAEIDPVSAERIHPNDPQRITRALEVYRLTSNTLTQLTQIKGAKLAGDVLQLAITPRERSTLHERIALRYQQMIDLGFEQEVIKLKSRDDLHQDLPSIRCVGYRQMWQHLEGEFDHDEMIFRGVCATRQLAKRQLTWLRNWPDLHWLTTDDKTNLAQVLSLLEAKH.

Residue 19–26 (GPTASGKT) coordinates ATP. 21–26 (TASGKT) contacts substrate. 3 interaction with substrate tRNA regions span residues 44–47 (DSAL), 168–172 (QRITR), and 249–254 (RCVGYR).

It belongs to the IPP transferase family. In terms of assembly, monomer. Mg(2+) serves as cofactor.

The catalysed reaction is adenosine(37) in tRNA + dimethylallyl diphosphate = N(6)-dimethylallyladenosine(37) in tRNA + diphosphate. Catalyzes the transfer of a dimethylallyl group onto the adenine at position 37 in tRNAs that read codons beginning with uridine, leading to the formation of N6-(dimethylallyl)adenosine (i(6)A). The sequence is that of tRNA dimethylallyltransferase from Colwellia psychrerythraea (strain 34H / ATCC BAA-681) (Vibrio psychroerythus).